We begin with the raw amino-acid sequence, 44 residues long: Cytochrome b559 subunit beta (44 aa).

Residues 19-35 form a helical membrane-spanning segment; it reads WLSIHALAVPTIFFLGS. Residue histidine 23 participates in heme binding.

This sequence belongs to the PsbE/PsbF family. Heterodimer of an alpha subunit and a beta subunit. PSII is composed of 1 copy each of membrane proteins PsbA, PsbB, PsbC, PsbD, PsbE, PsbF, PsbH, PsbI, PsbJ, PsbK, PsbL, PsbM, PsbT, PsbX, PsbY, PsbZ, Psb30/Ycf12, at least 3 peripheral proteins of the oxygen-evolving complex and a large number of cofactors. It forms dimeric complexes. Heme b serves as cofactor.

The protein resides in the plastid. The protein localises to the chloroplast thylakoid membrane. In terms of biological role, this b-type cytochrome is tightly associated with the reaction center of photosystem II (PSII). PSII is a light-driven water:plastoquinone oxidoreductase that uses light energy to abstract electrons from H(2)O, generating O(2) and a proton gradient subsequently used for ATP formation. It consists of a core antenna complex that captures photons, and an electron transfer chain that converts photonic excitation into a charge separation. The sequence is that of Cytochrome b559 subunit beta from Tetradesmus obliquus (Green alga).